A 184-amino-acid chain; its full sequence is ADP-ribosylation factor-like protein 8c (184 aa).

Positions 1-18 (MGLWDSLLNWLRSLFFKQ) form an intramembrane region, note=Mediates targeting to membranes. Residues 29 to 34 (NAGKTS), 48 to 51 (MIPT), 70 to 74 (DLGGQ), and 129 to 132 (NKID) each bind GTP.

The protein belongs to the small GTPase superfamily. Arf family. Interacts with tubulin.

The protein localises to the late endosome membrane. It localises to the lysosome membrane. Its subcellular location is the cytoplasm. It is found in the cytoskeleton. The protein resides in the spindle. Its function is as follows. May play a role in lysosome motility. May play a role in chromosome segregation. (Microbial infection) Component of tomato mosaic virus (ToMV) RNA replication complexes. Required for tobamovirus multiplication, especially for efficient negative-strand RNA synthesis and viral RNA capping. This chain is ADP-ribosylation factor-like protein 8c, found in Arabidopsis thaliana (Mouse-ear cress).